Reading from the N-terminus, the 332-residue chain is Phenol 2-monooxygenase, oxygenase component MhpL (332 aa).

This sequence belongs to the TmoE/XamoE family.

It carries out the reaction phenol + NADH + O2 + H(+) = catechol + NAD(+) + H2O. It functions in the pathway aromatic compound metabolism; phenol degradation. Part of a multicomponent enzyme which catalyzes the degradation of phenol and some of its methylated derivatives. This chain is Phenol 2-monooxygenase, oxygenase component MhpL (mphL), found in Acinetobacter pittii (strain PHEA-2).